We begin with the raw amino-acid sequence, 69 residues long: Conotoxin reg3f (69 aa).

An N-terminal signal peptide occupies residues 1–20 (MMSKLGVLLTICLLLFPLSA). The propeptide occupies 21–52 (LPLDGDQPADQPAERMQDISPEQNPLFHPDKR). 3 cysteine pairs are disulfide-bonded: cysteine 54–cysteine 68, cysteine 55–cysteine 66, and cysteine 60–cysteine 69. Cysteine 69 carries the cysteine amide modification.

Expressed by the venom duct.

Its subcellular location is the secreted. The polypeptide is Conotoxin reg3f (Conus regius (Crown cone)).